We begin with the raw amino-acid sequence, 151 residues long: Deoxyuridine 5'-triphosphate nucleotidohydrolase (151 aa).

Substrate-binding positions include 70–72 (RSG), Asn-83, 87–89 (LID), and Met-97.

It belongs to the dUTPase family. It depends on Mg(2+) as a cofactor.

The enzyme catalyses dUTP + H2O = dUMP + diphosphate + H(+). It functions in the pathway pyrimidine metabolism; dUMP biosynthesis; dUMP from dCTP (dUTP route): step 2/2. Its function is as follows. This enzyme is involved in nucleotide metabolism: it produces dUMP, the immediate precursor of thymidine nucleotides and it decreases the intracellular concentration of dUTP so that uracil cannot be incorporated into DNA. The polypeptide is Deoxyuridine 5'-triphosphate nucleotidohydrolase (Haemophilus influenzae (strain 86-028NP)).